The chain runs to 34 residues: MSDIN-like toxin proprotein 3 (34 aa).

The propeptide occupies 1–10; sequence MSDINVIRAP. A cross-link (cyclopeptide (Leu-Pro)) is located at residues 11–18; it reads LLILSILP. The propeptide occupies 19–34; it reads CVGDDIEVLRRGEGLS.

Belongs to the MSDIN fungal toxin family. Processed by the macrocyclase-peptidase enzyme POPB to yield a toxic cyclic octapeptide. POPB first removes 10 residues from the N-terminus. Conformational trapping of the remaining peptide forces the enzyme to release this intermediate rather than proceed to macrocyclization. The enzyme rebinds the remaining peptide in a different conformation and catalyzes macrocyclization of the N-terminal 8 residues. Expressed in basidiocarps.

Functionally, probable toxin that belongs to the MSDIN-like toxin family responsible for a large number of food poisoning cases and deaths. This chain is MSDIN-like toxin proprotein 3, found in Amanita exitialis (Guangzhou destroying angel).